Here is a 393-residue protein sequence, read N- to C-terminus: Probable RNA methyltransferase sce3898 (393 aa).

E82 serves as the catalytic Proton acceptor. A Radical SAM core domain is found at R90–R329. C97 and C353 are joined by a disulfide. [4Fe-4S] cluster contacts are provided by C104, C108, and C111. S-adenosyl-L-methionine contacts are provided by residues G157–E158, S212–G214, and N294. The S-methylcysteine intermediate role is filled by C353. Residues A357–A393 form a disordered region. Residues P373–A382 are compositionally biased toward low complexity.

Belongs to the radical SAM superfamily. RlmN family. [4Fe-4S] cluster serves as cofactor.

Its subcellular location is the cytoplasm. The sequence is that of Probable RNA methyltransferase sce3898 from Sorangium cellulosum (strain So ce56) (Polyangium cellulosum (strain So ce56)).